The following is an 85-amino-acid chain: Small ribosomal subunit protein bS18c (85 aa).

It belongs to the bacterial ribosomal protein bS18 family. In terms of assembly, part of the 30S ribosomal subunit.

Its subcellular location is the plastid. The protein resides in the chloroplast. The protein is Small ribosomal subunit protein bS18c of Tupiella akineta (Green alga).